The following is an 89-amino-acid chain: Small ribosomal subunit protein uS17 (89 aa).

It belongs to the universal ribosomal protein uS17 family. In terms of assembly, part of the 30S ribosomal subunit.

One of the primary rRNA binding proteins, it binds specifically to the 5'-end of 16S ribosomal RNA. The protein is Small ribosomal subunit protein uS17 of Polaromonas naphthalenivorans (strain CJ2).